A 439-amino-acid polypeptide reads, in one-letter code: Proline--tRNA ligase (439 aa).

The protein belongs to the class-II aminoacyl-tRNA synthetase family. ProS type 2 subfamily. Homodimer.

The protein resides in the cytoplasm. It carries out the reaction tRNA(Pro) + L-proline + ATP = L-prolyl-tRNA(Pro) + AMP + diphosphate. Functionally, catalyzes the attachment of proline to tRNA(Pro) in a two-step reaction: proline is first activated by ATP to form Pro-AMP and then transferred to the acceptor end of tRNA(Pro). The sequence is that of Proline--tRNA ligase from Rhodopseudomonas palustris (strain BisA53).